A 283-amino-acid chain; its full sequence is Putative sugar uptake protein BA_0200/GBAA_0200/BAS0200 (283 aa).

Helical transmembrane passes span 4–21 (LLAL…LVSV), 26–48 (GAYS…MYVF), 52–71 (ALTM…WALG), 84–106 (VSTT…GVIA), 110–132 (WTTT…GVVF), 151–173 (LLTL…WYNI), 178–195 (AILP…VLTS), 208–230 (ALSG…RVGV), 234–253 (FPLS…VFLG), and 260–279 (QLIF…VLLG).

This sequence belongs to the GRP transporter (TC 2.A.7.5) family.

Its subcellular location is the cell membrane. The sequence is that of Putative sugar uptake protein BA_0200/GBAA_0200/BAS0200 from Bacillus anthracis.